The chain runs to 85 residues: Putative membrane protein insertion efficiency factor (85 aa).

The protein belongs to the UPF0161 family.

The protein localises to the cell inner membrane. In terms of biological role, could be involved in insertion of integral membrane proteins into the membrane. This chain is Putative membrane protein insertion efficiency factor, found in Escherichia coli O6:H1 (strain CFT073 / ATCC 700928 / UPEC).